A 379-amino-acid chain; its full sequence is Cytochrome b (379 aa).

The next 4 membrane-spanning stretches (helical) occupy residues 33 to 53 (FGSL…FLAM), 77 to 98 (WLIR…FIHV), 113 to 133 (WNIG…GYVL), and 178 to 198 (FFAF…VHLL). Positions 83 and 97 each coordinate heme b. Heme b is bound by residues His-182 and His-196. Residue His-201 coordinates a ubiquinone. Helical transmembrane passes span 226–246 (IKDL…ALFF), 288–308 (LGGV…PLLN), 320–340 (VTQT…WIGG), and 347–367 (FTMI…ILIP).

The protein belongs to the cytochrome b family. As to quaternary structure, the cytochrome bc1 complex contains 11 subunits: 3 respiratory subunits (MT-CYB, CYC1 and UQCRFS1), 2 core proteins (UQCRC1 and UQCRC2) and 6 low-molecular weight proteins (UQCRH/QCR6, UQCRB/QCR7, UQCRQ/QCR8, UQCR10/QCR9, UQCR11/QCR10 and a cleavage product of UQCRFS1). This cytochrome bc1 complex then forms a dimer. Heme b serves as cofactor.

The protein resides in the mitochondrion inner membrane. In terms of biological role, component of the ubiquinol-cytochrome c reductase complex (complex III or cytochrome b-c1 complex) that is part of the mitochondrial respiratory chain. The b-c1 complex mediates electron transfer from ubiquinol to cytochrome c. Contributes to the generation of a proton gradient across the mitochondrial membrane that is then used for ATP synthesis. This chain is Cytochrome b (MT-CYB), found in Akodon philipmyersi (Myers' grass mouse).